The primary structure comprises 601 residues: 3-hydroxy-3-methylglutaryl-coenzyme A reductase (601 aa).

Residues 1-34 (MDSRRRSPTVTAKAAAGELPLAPHEGQNQQPSIP) are disordered. Helical transmembrane passes span 36–58 (SSDVLPLPLYLANGVFFTLFFSV) and 86–106 (ALASLIASVIYLVSFFGLDFV). The segment at 107–179 (QSLIYKPNNE…PLITPQNSEE (73 aa)) is linker. Residues 180-601 (DEDIIKAVVA…IASSQLESDS (422 aa)) form a catalytic region. Glu-273 acts as the Charge relay system in catalysis. A glycan (N-linked (GlcNAc...) asparagine) is linked at Asn-337. Catalysis depends on charge relay system residues Lys-405 and Asp-481. Catalysis depends on His-579, which acts as the Proton donor. Asn-583 is a glycosylation site (N-linked (GlcNAc...) asparagine).

This sequence belongs to the HMG-CoA reductase family.

Its subcellular location is the endoplasmic reticulum membrane. It carries out the reaction (R)-mevalonate + 2 NADP(+) + CoA = (3S)-3-hydroxy-3-methylglutaryl-CoA + 2 NADPH + 2 H(+). Its pathway is metabolic intermediate biosynthesis; (R)-mevalonate biosynthesis; (R)-mevalonate from acetyl-CoA: step 3/3. Catalyzes the synthesis of mevalonate. The specific precursor of all isoprenoid compounds present in plants. The chain is 3-hydroxy-3-methylglutaryl-coenzyme A reductase (HMGR) from Catharanthus roseus (Madagascar periwinkle).